The chain runs to 269 residues: Staphylococcal secretory antigen ssaA2 (269 aa).

The first 27 residues, 1–27, serve as a signal peptide directing secretion; sequence MKKIATATIATAGFATIAIASGNQAHA. 7 repeat units span residues 83–85, 88–90, 91–93, 97–99, 103–105, 106–108, and 115–117. Positions 83–115 are 7 X 3 AA repeats of Y-[NS]-N; the sequence is YNNYNYNNYNNGYSYNNYSRYNNYSNNNQSYNY. Residues 148–269 enclose the Peptidase C51 domain; it reads MAPSSNGRSI…SQAAGYNFIH (122 aa).

Its subcellular location is the secreted. Its function is as follows. Not known; immunogenic protein. This is Staphylococcal secretory antigen ssaA2 (ssaA2) from Staphylococcus aureus (strain MSSA476).